Consider the following 353-residue polypeptide: MTVILERRESESLWGRFCNWITSTENRLYIGWFGVLMIPTLLTATSVFIIAFIAAPPVDIDGIREPVSGSLLYGNNIISGAIIPTSAAIGLHFYPIWEAASVDEWLYNGGPYELIVLHFLLGVACYMGREWELSFRLGMRPWIAVAYSAPVAAAAAVFLIYPIGQGSFSDGMPLGISGTFNFMIVFQAEHNILMHPFHMLGVAGVFGGSLFSAMHGSLVTSSLIRETTENESANAGYRFGQEEETYNIVAAHGYFGRLIFQYASFNNSRSLHFFLAAWPVVGIWFTALGISTMAFNLNGFNFNQSVVDSQGRVINTWADIINRANLGMEVMHERNAHNFPLDLAAVEAPSING.

T2 is subject to N-acetylthreonine. The residue at position 2 (T2) is a Phosphothreonine. Helical transmembrane passes span 29–46 (YIGWFGVLMIPTLLTATS), 118–133 (HFLLGVACYMGREWEL), and 142–156 (WIAVAYSAPVAAAAA). H118 lines the chlorophyll a pocket. Y126 lines the pheophytin a pocket. D170 and E189 together coordinate [CaMn4O5] cluster. A helical transmembrane segment spans residues 197 to 218 (FHMLGVAGVFGGSLFSAMHGSL). H198 provides a ligand contact to chlorophyll a. A quinone-binding positions include H215 and 264–265 (SF). Residue H215 participates in Fe cation binding. H272 is a Fe cation binding site. A helical membrane pass occupies residues 274-288 (FLAAWPVVGIWFTAL). [CaMn4O5] cluster-binding residues include H332, E333, D342, and A344. Positions 345 to 353 (AVEAPSING) are excised as a propeptide.

Belongs to the reaction center PufL/M/PsbA/D family. In terms of assembly, PSII is composed of 1 copy each of membrane proteins PsbA, PsbB, PsbC, PsbD, PsbE, PsbF, PsbH, PsbI, PsbJ, PsbK, PsbL, PsbM, PsbT, PsbX, PsbY, PsbZ, Psb30/Ycf12, at least 3 peripheral proteins of the oxygen-evolving complex and a large number of cofactors. It forms dimeric complexes. Requires The D1/D2 heterodimer binds P680, chlorophylls that are the primary electron donor of PSII, and subsequent electron acceptors. It shares a non-heme iron and each subunit binds pheophytin, quinone, additional chlorophylls, carotenoids and lipids. D1 provides most of the ligands for the Mn4-Ca-O5 cluster of the oxygen-evolving complex (OEC). There is also a Cl(-1) ion associated with D1 and D2, which is required for oxygen evolution. The PSII complex binds additional chlorophylls, carotenoids and specific lipids. as cofactor. In terms of processing, tyr-161 forms a radical intermediate that is referred to as redox-active TyrZ, YZ or Y-Z. C-terminally processed by CTPA; processing is essential to allow assembly of the oxygen-evolving complex and thus photosynthetic growth.

Its subcellular location is the plastid. The protein localises to the chloroplast thylakoid membrane. The catalysed reaction is 2 a plastoquinone + 4 hnu + 2 H2O = 2 a plastoquinol + O2. Photosystem II (PSII) is a light-driven water:plastoquinone oxidoreductase that uses light energy to abstract electrons from H(2)O, generating O(2) and a proton gradient subsequently used for ATP formation. It consists of a core antenna complex that captures photons, and an electron transfer chain that converts photonic excitation into a charge separation. The D1/D2 (PsbA/PsbD) reaction center heterodimer binds P680, the primary electron donor of PSII as well as several subsequent electron acceptors. The protein is Photosystem II protein D1 of Vitis vinifera (Grape).